The sequence spans 263 residues: UPF0328 protein ECU08_2060 (263 aa).

It belongs to the UPF0328 family.

This is UPF0328 protein ECU08_2060 from Encephalitozoon cuniculi (strain GB-M1) (Microsporidian parasite).